Consider the following 92-residue polypeptide: Protein S100-B (92 aa).

An N-acetylserine modification is found at serine 2. EF-hand domains lie at 13 to 48 (DVFH…LEEI) and 49 to 84 (KEQE…VTTA). Position 16 (histidine 16) interacts with Zn(2+). Positions 19 and 22 each coordinate Ca(2+). Residue histidine 26 coordinates Zn(2+). Ca(2+)-binding residues include lysine 27, glutamate 32, aspartate 62, aspartate 64, aspartate 66, glutamate 68, and glutamate 73. Zn(2+) contacts are provided by histidine 86 and histidine 91.

Belongs to the S-100 family. Dimer of either two alpha chains, or two beta chains, or one alpha and one beta chain. The S100B dimer binds two molecules of STK38. Interacts with CACYBP in a calcium-dependent manner. Interacts with ATAD3A; this interaction probably occurs in the cytosol prior to ATAD3A mitochondrial targeting. Interacts with S100A6. The S100B dimer interacts with two molecules of CAPZA1. Interacts with AGER. Interacts with PPP5C (via TPR repeats); the interaction is calcium-dependent and modulates PPP5C activity. Interacts with TPPP; this interaction inhibits TPPP dimerization. Interacts with isoform CLSTN3beta of CLSTN3; interaction promotes secretion. As to expression, although predominant among the water-soluble brain proteins, S100 is also found in a variety of other tissues.

It is found in the cytoplasm. The protein resides in the nucleus. Its subcellular location is the secreted. In terms of biological role, small zinc- and- and calcium-binding protein that is highly expressed in astrocytes and constitutes one of the most abundant soluble proteins in brain. Weakly binds calcium but binds zinc very tightly-distinct binding sites with different affinities exist for both ions on each monomer. Physiological concentrations of potassium ion antagonize the binding of both divalent cations, especially affecting high-affinity calcium-binding sites. Acts as a neurotrophic factor that promotes astrocytosis and axonal proliferation. Involved in innervation of thermogenic adipose tissue by acting as an adipocyte-derived neurotrophic factor that promotes sympathetic innervation of adipose tissue. Binds to and initiates the activation of STK38 by releasing autoinhibitory intramolecular interactions within the kinase. Interaction with AGER after myocardial infarction may play a role in myocyte apoptosis by activating ERK1/2 and p53/TP53 signaling. Could assist ATAD3A cytoplasmic processing, preventing aggregation and favoring mitochondrial localization. May mediate calcium-dependent regulation on many physiological processes by interacting with other proteins, such as TPR-containing proteins, and modulating their activity. This is Protein S100-B from Rattus norvegicus (Rat).